The sequence spans 304 residues: Homoserine kinase (304 aa).

Residue 92–102 (PLARGLGSSAT) participates in ATP binding.

The protein belongs to the GHMP kinase family. Homoserine kinase subfamily.

It localises to the cytoplasm. It catalyses the reaction L-homoserine + ATP = O-phospho-L-homoserine + ADP + H(+). Its pathway is amino-acid biosynthesis; L-threonine biosynthesis; L-threonine from L-aspartate: step 4/5. Catalyzes the ATP-dependent phosphorylation of L-homoserine to L-homoserine phosphate. This chain is Homoserine kinase, found in Nostoc punctiforme (strain ATCC 29133 / PCC 73102).